The following is a 459-amino-acid chain: UDP-N-acetylmuramoylalanine--D-glutamate ligase (459 aa).

119-125 (GTNGKTT) contributes to the ATP binding site.

It belongs to the MurCDEF family.

The protein resides in the cytoplasm. The catalysed reaction is UDP-N-acetyl-alpha-D-muramoyl-L-alanine + D-glutamate + ATP = UDP-N-acetyl-alpha-D-muramoyl-L-alanyl-D-glutamate + ADP + phosphate + H(+). Its pathway is cell wall biogenesis; peptidoglycan biosynthesis. Cell wall formation. Catalyzes the addition of glutamate to the nucleotide precursor UDP-N-acetylmuramoyl-L-alanine (UMA). This Lacticaseibacillus casei (strain BL23) (Lactobacillus casei) protein is UDP-N-acetylmuramoylalanine--D-glutamate ligase.